We begin with the raw amino-acid sequence, 341 residues long: Cell wall mannoprotein PIR1 (341 aa).

Residues 1 to 18 (MQYKKSLVASALVATSLA) form the signal peptide. Residues 19–63 (AYAPKDPWSTLTPSATYKGGITDYSSTFGIAVEPIATTASSKAKR) constitute a propeptide that is removed on maturation. PIR1/2/3 repeat units lie at residues 64–82 (AAAI…TKTT), 83–101 (AAAV…TKTK), 102–125 (AAAV…AKTT), 126–144 (AAAV…TKTK), 145–163 (AAAV…TKTT), 164–182 (AAAV…TKTT), 183–201 (AAAV…TNTT), and 202–220 (VAPV…TLTS).

The protein belongs to the PIR protein family. Covalently linked to beta-1,3-glucan of the inner cell wall layer via an alkali-sensitive ester linkage between the gamma-carboxyl group of glutamic acids, arising from specific glutamines within the PIR1/2/3 repeats, and hydroxyl groups of glucoses of beta-1,3-glucan chains. Post-translationally, O-glycosylated. Extensively O-mannosylated.

It localises to the secreted. The protein resides in the cell wall. Its function is as follows. Component of the outer cell wall layer. Required for stability of the cell wall and for optimal growth. Required for resistance against several antifungal and cell wall-perturbing agents and for tolerance to heat shock. The sequence is that of Cell wall mannoprotein PIR1 (PIR1) from Saccharomyces cerevisiae (strain ATCC 204508 / S288c) (Baker's yeast).